A 311-amino-acid polypeptide reads, in one-letter code: Acetaldehyde dehydrogenase (311 aa).

Cys131 serves as the catalytic Acyl-thioester intermediate. Residues 162–170 (SVGPGTRKN) and Asn273 contribute to the NAD(+) site.

The protein belongs to the acetaldehyde dehydrogenase family.

It carries out the reaction acetaldehyde + NAD(+) + CoA = acetyl-CoA + NADH + H(+). The protein is Acetaldehyde dehydrogenase of Ralstonia pickettii (strain 12J).